We begin with the raw amino-acid sequence, 283 residues long: Bifunctional protein FolD (283 aa).

Residues 165–167 (GRG), Thr-192, and Val-233 contribute to the NADP(+) site.

It belongs to the tetrahydrofolate dehydrogenase/cyclohydrolase family. Homodimer.

The catalysed reaction is (6R)-5,10-methylene-5,6,7,8-tetrahydrofolate + NADP(+) = (6R)-5,10-methenyltetrahydrofolate + NADPH. The enzyme catalyses (6R)-5,10-methenyltetrahydrofolate + H2O = (6R)-10-formyltetrahydrofolate + H(+). The protein operates within one-carbon metabolism; tetrahydrofolate interconversion. In terms of biological role, catalyzes the oxidation of 5,10-methylenetetrahydrofolate to 5,10-methenyltetrahydrofolate and then the hydrolysis of 5,10-methenyltetrahydrofolate to 10-formyltetrahydrofolate. The sequence is that of Bifunctional protein FolD from Mycolicibacterium smegmatis (strain ATCC 700084 / mc(2)155) (Mycobacterium smegmatis).